A 319-amino-acid chain; its full sequence is DNA-directed RNA polymerases II, IV and V subunit 3 (319 aa).

Met1 is subject to N-acetylmethionine.

This sequence belongs to the archaeal Rpo3/eukaryotic RPB3 RNA polymerase subunit family. Component of the RNA polymerase II complex consisting of at least 12 subunits. Interacts with SHH1, CLSY1, NRPB11 and NRPD1. Interacts with IYO.

It is found in the nucleus. In terms of biological role, DNA-dependent RNA polymerase catalyzes the transcription of DNA into RNA using the four ribonucleoside triphosphates as substrates. Component of RNA polymerase II which synthesizes mRNA precursors and many functional non-coding RNAs. Pol II is the central component of the basal RNA polymerase II transcription machinery. It is composed of mobile elements that move relative to each other. NRPB3 is part of the core element with the central large cleft and the clamp element that moves to open and close the cleft. Component of RNA polymerases IV and V which mediate short-interfering RNAs (siRNA) accumulation and subsequent RNA-directed DNA methylation-dependent (RdDM) transcriptional gene silencing (TGS) of endogenous repeated sequences, including transposable elements. The chain is DNA-directed RNA polymerases II, IV and V subunit 3 (NRPB3) from Arabidopsis thaliana (Mouse-ear cress).